Reading from the N-terminus, the 369-residue chain is DNA replication and repair protein RecF (369 aa).

An ATP-binding site is contributed by 30–37 (GQNGMGKT).

It belongs to the RecF family.

The protein resides in the cytoplasm. The RecF protein is involved in DNA metabolism; it is required for DNA replication and normal SOS inducibility. RecF binds preferentially to single-stranded, linear DNA. It also seems to bind ATP. The protein is DNA replication and repair protein RecF of Bacteroides thetaiotaomicron (strain ATCC 29148 / DSM 2079 / JCM 5827 / CCUG 10774 / NCTC 10582 / VPI-5482 / E50).